The primary structure comprises 242 residues: UPF0246 protein SPD_1378 (242 aa).

This sequence belongs to the UPF0246 family.

The sequence is that of UPF0246 protein SPD_1378 from Streptococcus pneumoniae serotype 2 (strain D39 / NCTC 7466).